The primary structure comprises 495 residues: MVSIEAMKDSNWDLQIQVFRRRLNPEVIEARNEIFLSLPSDHGLITLVINKDKPFQISVLLEKNQEFMQTAMNKYVETAFQNQKTTLTSLFNYLLQNWKSFETCNTKERELMVQQVDSKKPETPTDLEPLANKLEGPLSERVHLNTTLDYEVLRGQNHCQKQNTTQTKTTISGSEQLFNDEKPKKIIYSKGGNDGKEDDLQNVNEPQDAYSNDHDIQSKDTELLGNEYCLEWKNPHLTNVGTLKAPILRLVIKCVRCHYGSEISIATKFSLVCNKCSNTLRLVWVPGVIHPNNARLGILHTLGCVPVDVMPIDCQVSCMECVDEQITSFKGISSMQPMLQFCKVCKNRILVEHQDTEFHLLKQRQSSMGGKVSAKKKQKQNLNITKGLPLPNNGACEHYKKSFRWFRFSCCDRVYPCDECHDADQNHTFEHANRIICGYCAMESFYKKDATCPHCGNMTVKKQTSAYWEGGKGMRDRVRMSRKDPRKYKRKHHGN.

The CHY-type zinc-finger motif lies at 389 to 457 (PLPNNGACEH…KDATCPHCGN (69 aa)). Zn(2+) contacts are provided by Cys396, His398, Cys410, Cys411, Cys417, Cys420, His421, His427, Cys437, Cys440, Cys452, and Cys455. A compositionally biased stretch (basic and acidic residues) spans 473–483 (GMRDRVRMSRK). The disordered stretch occupies residues 473 to 495 (GMRDRVRMSRKDPRKYKRKHHGN). Over residues 484–495 (DPRKYKRKHHGN) the composition is skewed to basic residues.

Its subcellular location is the cytoplasm. This is an uncharacterized protein from Schizosaccharomyces pombe (strain 972 / ATCC 24843) (Fission yeast).